The primary structure comprises 304 residues: uncharacterized protein (304 aa).

72-79 (GPTGSGKT) contributes to the ATP binding site.

It belongs to the CbbQ/NirQ/NorQ/GpvN family.

This is an uncharacterized protein from Bacillus subtilis (strain 168).